A 196-amino-acid chain; its full sequence is Holliday junction branch migration complex subunit RuvA (196 aa).

The tract at residues 1–63 is domain I; it reads MIASVRGEVL…EDSMTLYGFP (63 aa). The tract at residues 64 to 138 is domain II; sequence DGETRDLFLT…DKVGVAATGG (75 aa). The flexible linker stretch occupies residues 138 to 142; the sequence is GALST. Residues 143 to 196 are domain III; that stretch reads NGHAVRSPVVEALVGLGFAAKQAEEATDTVLAANHDATTSSALRSALSLLGKAR.

It belongs to the RuvA family. Homotetramer. Forms an RuvA(8)-RuvB(12)-Holliday junction (HJ) complex. HJ DNA is sandwiched between 2 RuvA tetramers; dsDNA enters through RuvA and exits via RuvB. An RuvB hexamer assembles on each DNA strand where it exits the tetramer. Each RuvB hexamer is contacted by two RuvA subunits (via domain III) on 2 adjacent RuvB subunits; this complex drives branch migration. In the full resolvosome a probable DNA-RuvA(4)-RuvB(12)-RuvC(2) complex forms which resolves the HJ.

The protein resides in the cytoplasm. The RuvA-RuvB-RuvC complex processes Holliday junction (HJ) DNA during genetic recombination and DNA repair, while the RuvA-RuvB complex plays an important role in the rescue of blocked DNA replication forks via replication fork reversal (RFR). RuvA specifically binds to HJ cruciform DNA, conferring on it an open structure. The RuvB hexamer acts as an ATP-dependent pump, pulling dsDNA into and through the RuvAB complex. HJ branch migration allows RuvC to scan DNA until it finds its consensus sequence, where it cleaves and resolves the cruciform DNA. This chain is Holliday junction branch migration complex subunit RuvA, found in Mycobacterium bovis (strain ATCC BAA-935 / AF2122/97).